Here is a 141-residue protein sequence, read N- to C-terminus: Nucleoside diphosphate kinase (141 aa).

ATP is bound by residues lysine 11, phenylalanine 59, arginine 87, threonine 93, arginine 104, and asparagine 114. The active-site Pros-phosphohistidine intermediate is the histidine 117.

This sequence belongs to the NDK family. In terms of assembly, homotetramer. It depends on Mg(2+) as a cofactor.

Its subcellular location is the cytoplasm. It catalyses the reaction a 2'-deoxyribonucleoside 5'-diphosphate + ATP = a 2'-deoxyribonucleoside 5'-triphosphate + ADP. The catalysed reaction is a ribonucleoside 5'-diphosphate + ATP = a ribonucleoside 5'-triphosphate + ADP. Functionally, major role in the synthesis of nucleoside triphosphates other than ATP. The ATP gamma phosphate is transferred to the NDP beta phosphate via a ping-pong mechanism, using a phosphorylated active-site intermediate. This is Nucleoside diphosphate kinase from Methylibium petroleiphilum (strain ATCC BAA-1232 / LMG 22953 / PM1).